The sequence spans 298 residues: Tyrosine recombinase XerD (298 aa).

Positions 2–87 (KQDLARIEQF…AVRRLFQYLY (86 aa)) constitute a Core-binding (CB) domain. A Tyr recombinase domain is found at 108 to 292 (RLPKDLSEAQ…ATERLRQLHQ (185 aa)). Active-site residues include R148, K172, H244, R247, and H270. The O-(3'-phospho-DNA)-tyrosine intermediate role is filled by Y279.

Belongs to the 'phage' integrase family. XerD subfamily. In terms of assembly, forms a cyclic heterotetrameric complex composed of two molecules of XerC and two molecules of XerD, in which XerC interacts with XerD via its C-terminal region, XerD interacts with XerC via its C-terminal region and so on.

The protein localises to the cytoplasm. Its activity is regulated as follows. FtsK may regulate the catalytic switch between XerC and XerD in the heterotetrameric complex during the two steps of the recombination process. In terms of biological role, site-specific tyrosine recombinase, which acts by catalyzing the cutting and rejoining of the recombining DNA molecules. Binds cooperatively to specific DNA consensus sequences that are separated from XerC binding sites by a short central region, forming the heterotetrameric XerC-XerD complex that recombines DNA substrates. The complex is essential to convert dimers of the bacterial chromosome into monomers to permit their segregation at cell division. It also contributes to the segregational stability of plasmids. In the complex XerD specifically exchanges the bottom DNA strands. The sequence is that of Tyrosine recombinase XerD from Escherichia coli O157:H7.